A 162-amino-acid chain; its full sequence is uncharacterized protein (162 aa).

Residues 1–23 (MAQLPLSPAPQRPETKTPGKPEA) are disordered. The segment covering 13 to 23 (PETKTPGKPEA) has biased composition (basic and acidic residues).

This is an uncharacterized protein from Rhodobacter capsulatus (Rhodopseudomonas capsulata).